The sequence spans 407 residues: Semenogelin-2 (407 aa).

The N-terminal stretch at 1 to 23 (MKSIILFVLSLVLILEKQAAVMG) is a signal peptide. 4 disordered regions span residues 25-60 (KDGS…TKSK), 133-158 (GQAH…LSSQ), 173-192 (KEQA…GSQS), and 272-407 (NLNQ…NKIS). Polar residues-rich tracts occupy residues 31–40 (QLPSGSSQFP), 137–158 (CGTQ…LSSQ), and 174–192 (EQAS…GSQS). Residues 292–310 (RTEERQLNHGEKSVQKDVS) show a composition bias toward basic and acidic residues. The span at 325–334 (KSQNQVTIHS) shows a compositional bias: polar residues. The segment covering 335–345 (QDQEHGHKENK) has biased composition (basic and acidic residues). The segment covering 372–397 (GSISIQTEEQIHGKSQNXVRIPSQAQ) has biased composition (polar residues).

It belongs to the semenogelin family. As to quaternary structure, interacts with SERPINA5.

The protein resides in the secreted. In terms of biological role, participates in the formation of a gel matrix (sperm coagulum) entrapping the accessory gland secretions and ejaculated spermatozoa. This Pan troglodytes (Chimpanzee) protein is Semenogelin-2 (SEMG2).